We begin with the raw amino-acid sequence, 566 residues long: OTU domain-containing protein 5 (566 aa).

2 disordered regions span residues Met1–Leu117 and Gly145–Tyr175. Pro residues predominate over residues Pro11–Pro30. The span at Ala34–Gly47 shows a compositional bias: gly residues. The span at Ala63–Pro75 shows a compositional bias: pro residues. Ser64 bears the Phosphoserine mark. The span at Ala84–Gln97 shows a compositional bias: low complexity. Gly residues predominate over residues Gly105 to Asp115. Residue Ser165 is modified to Phosphoserine. Tyr175 carries the phosphotyrosine modification. Ser177 carries the phosphoserine modification. At Thr195 the chain carries Phosphothreonine. The 124-residue stretch at Phe213 to Pro336 folds into the OTU domain. Residues Met218 to Cys224 are cys-loop. Residue Asp221 is part of the active site. Catalysis depends on Cys224, which acts as the Nucleophile. The variable-loop stretch occupies residues Lys273–Ile283. Residue Ser323 is modified to Phosphoserine. The tract at residues Tyr324–His329 is his-loop. His329 is a catalytic residue. Ser332 and Ser370 each carry phosphoserine. The disordered stretch occupies residues Ala413–Asp499. Low complexity-rich tracts occupy residues Ala425–Ser438 and Ser445–Pro457. Ser447 is modified (phosphoserine). Thr502 is subject to Phosphothreonine. Residue Ser503 is modified to Phosphoserine.

This sequence belongs to the peptidase C85 family. As to quaternary structure, interacts with TRAF3. Post-translationally, phosphorylation at Ser-177 is required for deubiquitinating activity. Phosphorylation at Ser-323, Ser-332 and Ser-503 by MTOR promotes its activity.

The protein resides in the nucleus. It catalyses the reaction Thiol-dependent hydrolysis of ester, thioester, amide, peptide and isopeptide bonds formed by the C-terminal Gly of ubiquitin (a 76-residue protein attached to proteins as an intracellular targeting signal).. Its activity is regulated as follows. Inhibited by N-ethyl-maleimide (NEM). In terms of biological role, deubiquitinating enzyme that functions as a negative regulator of the innate immune system. Has peptidase activity towards 'Lys-48'- and 'Lys-63'-linked polyubiquitin chains. Can also cleave 'Lys-11'-linked ubiquitin chains (in vitro). Acts via TRAF3 deubiquitination and subsequent suppression of type I interferon (IFN) production. Controls neuroectodermal differentiation through cleaving 'Lys-48'-linked ubiquitin chains to counteract degradation of select chromatin regulators such as ARID1A, HDAC2 and HCF1. Acts as a positive regulator of mTORC1 and mTORC2 signaling following phosphorylation by MTOR: acts by mediating deubiquitination of BTRC, leading to its stability. The chain is OTU domain-containing protein 5 from Mus musculus (Mouse).